Consider the following 371-residue polypeptide: Vasopressin V2 receptor (371 aa).

The segment at 1 to 30 (MLMASTTSAVPGHPSLPSLPSNSSQERPLD) is disordered. The Extracellular portion of the chain corresponds to 1-38 (MLMASTTSAVPGHPSLPSLPSNSSQERPLDTRDPLLAR). Residues 15–24 (SLPSLPSNSS) show a composition bias toward low complexity. Asn22 is a glycosylation site (N-linked (GlcNAc...) asparagine). The chain crosses the membrane as a helical span at residues 39 to 63 (AELALLSIVFVAVALSNGLVLAALA). Over 64–77 (RRGRRGHWAPIHVF) the chain is Cytoplasmic. Residues 78-98 (IGHLCLADLAVALFQVLPQLA) form a helical membrane-spanning segment. The Extracellular segment spans residues 99-113 (WKATDRFRGPDALCR). Residues 114–135 (AVKYLQMVGMYASSYMILAMTL) traverse the membrane as a helical segment. Topologically, residues 136-159 (DRHRAICRPMLAYRHGSGAHWNRP) are cytoplasmic. The chain crosses the membrane as a helical span at residues 160–180 (VLVAWAFSLLLSLPQLFIFAQ). Residues 181–200 (RNVEGGSGVTDCWACFAEPW) lie on the Extracellular side of the membrane. Residues 201 to 220 (GRRTYVTWIALMVFVAPTLG) traverse the membrane as a helical segment. The Cytoplasmic portion of the chain corresponds to 221–271 (IAACQVLIFREIHASLVPGPSERPGGRRRGRRTGSPGEGAHVSAAVAKTVR). A disordered region spans residues 240–259 (PSERPGGRRRGRRTGSPGEG). Residues 272-293 (MTLVIVVVYVLCWAPFFLVQLW) traverse the membrane as a helical segment. At 294–308 (AAWDPEAPLEGAPFV) the chain is on the extracellular side. The chain crosses the membrane as a helical span at residues 309 to 328 (LLMLLASLNSCTNPWIYASF). Residues 329–371 (SSSVSSELRSLLCCARGRTPPSLGPQDESCTTASSSLAKDTSS) lie on the Cytoplasmic side of the membrane. 2 S-palmitoyl cysteine lipidation sites follow: Cys341 and Cys342. Residues 349 to 371 (PSLGPQDESCTTASSSLAKDTSS) form a disordered region. Polar residues predominate over residues 356–371 (ESCTTASSSLAKDTSS).

It belongs to the G-protein coupled receptor 1 family. Vasopressin/oxytocin receptor subfamily. As to quaternary structure, interacts with ARRDC4. Identified in a complex containing at least ARRDC4, V2R and HGS. Interacts with TMEM147. In terms of tissue distribution, kidney.

It localises to the cell membrane. Functionally, receptor for arginine vasopressin. The activity of this receptor is mediated by G proteins which activate adenylate cyclase. Involved in renal water reabsorption. The chain is Vasopressin V2 receptor (AVPR2) from Homo sapiens (Human).